A 542-amino-acid chain; its full sequence is Chaperonin GroEL (542 aa).

ATP is bound by residues 29-32 (TLGP), 86-90 (DGTTT), G413, 476-478 (NAA), and D492.

It belongs to the chaperonin (HSP60) family. Forms a cylinder of 14 subunits composed of two heptameric rings stacked back-to-back. Interacts with the co-chaperonin GroES.

It localises to the cytoplasm. It carries out the reaction ATP + H2O + a folded polypeptide = ADP + phosphate + an unfolded polypeptide.. Its function is as follows. Together with its co-chaperonin GroES, plays an essential role in assisting protein folding. The GroEL-GroES system forms a nano-cage that allows encapsulation of the non-native substrate proteins and provides a physical environment optimized to promote and accelerate protein folding. The protein is Chaperonin GroEL of Bacillus cytotoxicus (strain DSM 22905 / CIP 110041 / 391-98 / NVH 391-98).